Reading from the N-terminus, the 284-residue chain is Acetyl-coenzyme A carboxylase carboxyl transferase subunit beta (284 aa).

The 258-residue stretch at 27 to 284 (LMTKCPSCKY…ELHDGGVRHV (258 aa)) folds into the CoA carboxyltransferase N-terminal domain. Zn(2+)-binding residues include C31, C34, C50, and C52. The C4-type zinc-finger motif lies at 31–52 (CPSCKYMHYTKQLNENHKVCDC).

Belongs to the AccD/PCCB family. In terms of assembly, acetyl-CoA carboxylase is a heterohexamer composed of biotin carboxyl carrier protein (AccB), biotin carboxylase (AccC) and two subunits each of ACCase subunit alpha (AccA) and ACCase subunit beta (AccD). Zn(2+) serves as cofactor.

Its subcellular location is the cytoplasm. It carries out the reaction N(6)-carboxybiotinyl-L-lysyl-[protein] + acetyl-CoA = N(6)-biotinyl-L-lysyl-[protein] + malonyl-CoA. The protein operates within lipid metabolism; malonyl-CoA biosynthesis; malonyl-CoA from acetyl-CoA: step 1/1. Component of the acetyl coenzyme A carboxylase (ACC) complex. Biotin carboxylase (BC) catalyzes the carboxylation of biotin on its carrier protein (BCCP) and then the CO(2) group is transferred by the transcarboxylase to acetyl-CoA to form malonyl-CoA. The protein is Acetyl-coenzyme A carboxylase carboxyl transferase subunit beta of Exiguobacterium sp. (strain ATCC BAA-1283 / AT1b).